The primary structure comprises 217 residues: Oxygen regulatory protein NreC (217 aa).

The 118-residue stretch at 2 to 119 (KIVIADDHAV…QLLLAVRTVY (118 aa)) folds into the Response regulatory domain. Asp53 is subject to 4-aspartylphosphate. The HTH luxR-type domain maps to 148 to 213 (TNDPFKILSK…ELVEYALKKK (66 aa)). A DNA-binding region (H-T-H motif) is located at residues 172 to 191 (NKDIAEKLFVSVKTVEAHKT).

Post-translationally, phosphorylated by NreB.

It is found in the cytoplasm. In terms of biological role, member of the two-component regulatory system NreB/NreC involved in the control of dissimilatory nitrate/nitrite reduction in response to oxygen. Phosphorylated NreC binds to a GC-rich palindromic sequence at the promoters of the nitrate (narGHJI) and nitrite (nir) reductase operons, as well as the putative nitrate transporter gene narT, and activates their expression. The polypeptide is Oxygen regulatory protein NreC (nreC) (Staphylococcus haemolyticus (strain JCSC1435)).